The sequence spans 144 residues: NADH dehydrogenase [ubiquinone] 1 alpha subcomplex subunit 13 (144 aa).

An N-acetylalanine modification is found at alanine 2. The helical transmembrane segment at 30–51 (LSGYSMFAVGIGALIFGYWRMM) threads the bilayer.

It belongs to the complex I NDUFA13 subunit family. In terms of assembly, complex I is composed of 45 different subunits. Interacts with CARD15, but not with CARD4. Interacts with STAT3, but not with STAT1, STAT2 and STAT5A. Interacts with OLFM4.

The protein localises to the mitochondrion inner membrane. It is found in the nucleus. Its function is as follows. Accessory subunit of the mitochondrial membrane respiratory chain NADH dehydrogenase (Complex I), that is believed not to be involved in catalysis. Complex I functions in the transfer of electrons from NADH to the respiratory chain. The immediate electron acceptor for the enzyme is believed to be ubiquinone. Involved in the interferon/all-trans-retinoic acid (IFN/RA) induced cell death. This apoptotic activity is inhibited by interaction with viral IRF1. Prevents the transactivation of STAT3 target genes. May play a role in CARD15-mediated innate mucosal responses and serve to regulate intestinal epithelial cell responses to microbes. This is NADH dehydrogenase [ubiquinone] 1 alpha subcomplex subunit 13 (Ndufa13) from Mus musculus (Mouse).